Here is a 463-residue protein sequence, read N- to C-terminus: Tryprostatin B synthase (463 aa).

Positions 93 and 101 each coordinate brevianamide F. Dimethylallyl diphosphate-binding residues include Arg112, Lys200, and Tyr202. Tyr204 is a brevianamide F binding site. Lys293, Tyr295, Gln379, Tyr381, Tyr445, and Tyr449 together coordinate dimethylallyl diphosphate.

It belongs to the tryptophan dimethylallyltransferase family.

The enzyme catalyses brevianamide F + dimethylallyl diphosphate = tryprostatin B + diphosphate. It functions in the pathway mycotoxin biosynthesis. In terms of biological role, brevianamide F prenyltransferase; part of the gene cluster that mediates the biosynthesis of fumitremorgins, indole alkaloids that carry not only intriguing chemical structures, but also interesting biological and pharmacological activities. The biosynthesis of fumitremorgin-type alkaloids begins by condensation of the two amino acids L-tryptophan and L-proline to brevianamide F, catalyzed by the non-ribosomal peptide synthetase ftmPS/ftmA. Brevianamide F is then prenylated by the prenyltransferase ftmPT1/ftmB in the presence of dimethylallyl diphosphate, resulting in the formation of tryprostatin B. The three cytochrome P450 monooxygenases, ftmP450-1/ftmC, ftmP450-2/ftmE and ftmP450-3/FtmG, are responsible for the conversion of tryprostatin B to 6-hydroxytryprostatin B, tryprostatin A to fumitremorgin C and fumitremorgin C to 12,13-dihydroxyfumitremorgin C, respectively. The putative methyltransferase ftmMT/ftmD is expected for the conversion of 6-hydroxytryprostatin B to tryprostatin A. FtmPT2/FtmH catalyzes the prenylation of 12,13-dihydroxyfumitre-morgin C in the presence of dimethylallyl diphosphate, resulting in the formation of fumitremorgin B. Fumitremorgin B is further converted to verruculogen by ftmOx1/ftmF via the insertion of an endoperoxide bond between the two prenyl moieties. Finally, verruculogen is further converted to fumitremorgin A by the verruculogen prenyltransferase ftmPT3. This Neosartorya fischeri (strain ATCC 1020 / DSM 3700 / CBS 544.65 / FGSC A1164 / JCM 1740 / NRRL 181 / WB 181) (Aspergillus fischerianus) protein is Tryprostatin B synthase.